A 210-amino-acid polypeptide reads, in one-letter code: dTTP/UTP pyrophosphatase (210 aa).

Positions 1-15 are enriched in basic and acidic residues; the sequence is MTHGDNRDGPGRETR. Residues 1 to 22 are disordered; the sequence is MTHGDNRDGPGRETRSSGPLVL. Residue aspartate 86 is the Proton acceptor of the active site.

The protein belongs to the Maf family. YhdE subfamily. A divalent metal cation serves as cofactor.

It is found in the cytoplasm. It carries out the reaction dTTP + H2O = dTMP + diphosphate + H(+). It catalyses the reaction UTP + H2O = UMP + diphosphate + H(+). Functionally, nucleoside triphosphate pyrophosphatase that hydrolyzes dTTP and UTP. May have a dual role in cell division arrest and in preventing the incorporation of modified nucleotides into cellular nucleic acids. This chain is dTTP/UTP pyrophosphatase, found in Rhodospirillum rubrum (strain ATCC 11170 / ATH 1.1.1 / DSM 467 / LMG 4362 / NCIMB 8255 / S1).